A 268-amino-acid polypeptide reads, in one-letter code: Ubiquinone biosynthesis protein COQ4 homolog 1, mitochondrial (268 aa).

A compositionally biased stretch (basic residues) spans 1 to 10 (MFLRRVHPVR). A mitochondrion-targeting transit peptide spans 1-18 (MFLRRVHPVRLGHASQRS). The disordered stretch occupies residues 1–44 (MFLRRVHPVRLGHASQRSLTTTKSRNESTTTTVEAPQAAPSPPP). A compositionally biased stretch (low complexity) spans 20–38 (TTTKSRNESTTTTVEAPQA). The Zn(2+) site is built by His-177, Asp-178, His-181, and Glu-193.

The protein belongs to the COQ4 family. In terms of assembly, component of a multi-subunit COQ enzyme complex. The cofactor is Zn(2+).

The protein resides in the mitochondrion inner membrane. It carries out the reaction a 4-hydroxy-3-methoxy-5-(all-trans-polyprenyl)benzoate + H(+) = a 2-methoxy-6-(all-trans-polyprenyl)phenol + CO2. The protein operates within cofactor biosynthesis; ubiquinone biosynthesis. In terms of biological role, lyase that catalyzes the C1-decarboxylation of 4-hydroxy-3-methoxy-5-(all-trans-polyprenyl)benzoic acid into 2-methoxy-6-(all-trans-polyprenyl)phenol during ubiquinone biosynthesis. In Culex quinquefasciatus (Southern house mosquito), this protein is Ubiquinone biosynthesis protein COQ4 homolog 1, mitochondrial.